The primary structure comprises 273 residues: 3-methyl-2-oxobutanoate hydroxymethyltransferase (273 aa).

Asp-53 and Asp-92 together coordinate Mg(2+). 3-methyl-2-oxobutanoate is bound by residues 53–54 (DS), Asp-92, and Lys-122. Glu-124 is a Mg(2+) binding site. The active-site Proton acceptor is the Glu-191.

This sequence belongs to the PanB family. In terms of assembly, homodecamer; pentamer of dimers. It depends on Mg(2+) as a cofactor.

Its subcellular location is the cytoplasm. It catalyses the reaction 3-methyl-2-oxobutanoate + (6R)-5,10-methylene-5,6,7,8-tetrahydrofolate + H2O = 2-dehydropantoate + (6S)-5,6,7,8-tetrahydrofolate. The protein operates within cofactor biosynthesis; (R)-pantothenate biosynthesis; (R)-pantoate from 3-methyl-2-oxobutanoate: step 1/2. Catalyzes the reversible reaction in which hydroxymethyl group from 5,10-methylenetetrahydrofolate is transferred onto alpha-ketoisovalerate to form ketopantoate. This is 3-methyl-2-oxobutanoate hydroxymethyltransferase from Phocaeicola vulgatus (strain ATCC 8482 / DSM 1447 / JCM 5826 / CCUG 4940 / NBRC 14291 / NCTC 11154) (Bacteroides vulgatus).